The following is a 198-amino-acid chain: Recombination protein RecR (198 aa).

The C4-type zinc finger occupies 57-72; that stretch reads CSICGNLTDDDPCHIC. In terms of domain architecture, Toprim spans 80–175; it reads TTILVVEDAK…KVTRLARGLA (96 aa).

This sequence belongs to the RecR family.

In terms of biological role, may play a role in DNA repair. It seems to be involved in an RecBC-independent recombinational process of DNA repair. It may act with RecF and RecO. This Streptococcus pyogenes serotype M1 protein is Recombination protein RecR.